The primary structure comprises 193 residues: Peptidyl-tRNA hydrolase (193 aa).

Tyrosine 16 provides a ligand contact to tRNA. The active-site Proton acceptor is histidine 21. TRNA-binding residues include phenylalanine 66, asparagine 68, and asparagine 114.

This sequence belongs to the PTH family. Monomer.

The protein localises to the cytoplasm. The catalysed reaction is an N-acyl-L-alpha-aminoacyl-tRNA + H2O = an N-acyl-L-amino acid + a tRNA + H(+). Its function is as follows. Hydrolyzes ribosome-free peptidyl-tRNAs (with 1 or more amino acids incorporated), which drop off the ribosome during protein synthesis, or as a result of ribosome stalling. In terms of biological role, catalyzes the release of premature peptidyl moieties from peptidyl-tRNA molecules trapped in stalled 50S ribosomal subunits, and thus maintains levels of free tRNAs and 50S ribosomes. The sequence is that of Peptidyl-tRNA hydrolase from Pelobacter propionicus (strain DSM 2379 / NBRC 103807 / OttBd1).